The chain runs to 291 residues: Nucleotide-binding protein lwe2422 (291 aa).

Gly13–Thr20 contributes to the ATP binding site. GTP is bound at residue Asp63–Gly66.

It belongs to the RapZ-like family.

Functionally, displays ATPase and GTPase activities. This Listeria welshimeri serovar 6b (strain ATCC 35897 / DSM 20650 / CCUG 15529 / CIP 8149 / NCTC 11857 / SLCC 5334 / V8) protein is Nucleotide-binding protein lwe2422.